The sequence spans 229 residues: Phosphoglycolate phosphatase (229 aa).

Asp-18 (nucleophile) is an active-site residue. Mg(2+)-binding residues include Asp-18, Asp-20, and Asp-176.

Belongs to the HAD-like hydrolase superfamily. CbbY/CbbZ/Gph/YieH family. Requires Mg(2+) as cofactor.

It carries out the reaction 2-phosphoglycolate + H2O = glycolate + phosphate. The protein operates within organic acid metabolism; glycolate biosynthesis; glycolate from 2-phosphoglycolate: step 1/1. Specifically catalyzes the dephosphorylation of 2-phosphoglycolate. Is involved in the dissimilation of the intracellular 2-phosphoglycolate formed during the DNA repair of 3'-phosphoglycolate ends, a major class of DNA lesions induced by oxidative stress. In Xylella fastidiosa (strain 9a5c), this protein is Phosphoglycolate phosphatase.